The primary structure comprises 70 residues: Cytochrome c oxidase subunit 8B, mitochondrial (70 aa).

A mitochondrion-targeting transit peptide spans Met1–His24. Residues Val25–Ser35 are Mitochondrial matrix-facing. The chain crosses the membrane as a helical span at residues Pro36–Ser59. The Mitochondrial intermembrane portion of the chain corresponds to His60 to Ala70.

It belongs to the cytochrome c oxidase VIII family. As to quaternary structure, component of the cytochrome c oxidase (complex IV, CIV), a multisubunit enzyme composed of 14 subunits. The complex is composed of a catalytic core of 3 subunits MT-CO1, MT-CO2 and MT-CO3, encoded in the mitochondrial DNA, and 11 supernumerary subunits COX4I, COX5A, COX5B, COX6A, COX6B, COX6C, COX7A, COX7B, COX7C, COX8 and NDUFA4, which are encoded in the nuclear genome. The complex exists as a monomer or a dimer and forms supercomplexes (SCs) in the inner mitochondrial membrane with NADH-ubiquinone oxidoreductase (complex I, CI) and ubiquinol-cytochrome c oxidoreductase (cytochrome b-c1 complex, complex III, CIII), resulting in different assemblies (supercomplex SCI(1)III(2)IV(1) and megacomplex MCI(2)III(2)IV(2)).

Its subcellular location is the mitochondrion inner membrane. The protein operates within energy metabolism; oxidative phosphorylation. Functionally, component of the cytochrome c oxidase, the last enzyme in the mitochondrial electron transport chain which drives oxidative phosphorylation. The respiratory chain contains 3 multisubunit complexes succinate dehydrogenase (complex II, CII), ubiquinol-cytochrome c oxidoreductase (cytochrome b-c1 complex, complex III, CIII) and cytochrome c oxidase (complex IV, CIV), that cooperate to transfer electrons derived from NADH and succinate to molecular oxygen, creating an electrochemical gradient over the inner membrane that drives transmembrane transport and the ATP synthase. Cytochrome c oxidase is the component of the respiratory chain that catalyzes the reduction of oxygen to water. Electrons originating from reduced cytochrome c in the intermembrane space (IMS) are transferred via the dinuclear copper A center (CU(A)) of subunit 2 and heme A of subunit 1 to the active site in subunit 1, a binuclear center (BNC) formed by heme A3 and copper B (CU(B)). The BNC reduces molecular oxygen to 2 water molecules using 4 electrons from cytochrome c in the IMS and 4 protons from the mitochondrial matrix. The sequence is that of Cytochrome c oxidase subunit 8B, mitochondrial (COX8B) from Eulemur fulvus fulvus (Brown lemur).